We begin with the raw amino-acid sequence, 357 residues long: DNA replication and repair protein RecF (357 aa).

30–37 contacts ATP; sequence GANGSGKT.

It belongs to the RecF family.

The protein localises to the cytoplasm. Its function is as follows. The RecF protein is involved in DNA metabolism; it is required for DNA replication and normal SOS inducibility. RecF binds preferentially to single-stranded, linear DNA. It also seems to bind ATP. In Enterobacter sp. (strain 638), this protein is DNA replication and repair protein RecF.